The following is a 131-amino-acid chain: ATP synthase epsilon chain, chloroplastic (131 aa).

It belongs to the ATPase epsilon chain family. As to quaternary structure, F-type ATPases have 2 components, CF(1) - the catalytic core - and CF(0) - the membrane proton channel. CF(1) has five subunits: alpha(3), beta(3), gamma(1), delta(1), epsilon(1). CF(0) has three main subunits: a, b and c.

The protein localises to the plastid. Its subcellular location is the chloroplast thylakoid membrane. Functionally, produces ATP from ADP in the presence of a proton gradient across the membrane. This Guillardia theta (Cryptophyte) protein is ATP synthase epsilon chain, chloroplastic.